A 78-amino-acid chain; its full sequence is Putative antitoxin PF1222 (78 aa).

The protein belongs to the UPF0330 family.

Functionally, possibly the antitoxin component of a type II toxin-antitoxin (TA) system. This chain is Putative antitoxin PF1222, found in Pyrococcus furiosus (strain ATCC 43587 / DSM 3638 / JCM 8422 / Vc1).